Consider the following 129-residue polypeptide: uncharacterized protein (129 aa).

Its subcellular location is the cytoplasm. It localises to the cytosol. The protein localises to the nucleus. This is an uncharacterized protein from Schizosaccharomyces pombe (strain 972 / ATCC 24843) (Fission yeast).